A 95-amino-acid chain; its full sequence is Aspartyl/glutamyl-tRNA(Asn/Gln) amidotransferase subunit C (95 aa).

It belongs to the GatC family. Heterotrimer of A, B and C subunits.

It carries out the reaction L-glutamyl-tRNA(Gln) + L-glutamine + ATP + H2O = L-glutaminyl-tRNA(Gln) + L-glutamate + ADP + phosphate + H(+). The enzyme catalyses L-aspartyl-tRNA(Asn) + L-glutamine + ATP + H2O = L-asparaginyl-tRNA(Asn) + L-glutamate + ADP + phosphate + 2 H(+). In terms of biological role, allows the formation of correctly charged Asn-tRNA(Asn) or Gln-tRNA(Gln) through the transamidation of misacylated Asp-tRNA(Asn) or Glu-tRNA(Gln) in organisms which lack either or both of asparaginyl-tRNA or glutaminyl-tRNA synthetases. The reaction takes place in the presence of glutamine and ATP through an activated phospho-Asp-tRNA(Asn) or phospho-Glu-tRNA(Gln). The sequence is that of Aspartyl/glutamyl-tRNA(Asn/Gln) amidotransferase subunit C from Alkalilimnicola ehrlichii (strain ATCC BAA-1101 / DSM 17681 / MLHE-1).